A 166-amino-acid chain; its full sequence is Lipoprotein signal peptidase (166 aa).

The next 4 membrane-spanning stretches (helical) occupy residues 10 to 30 (GGALAPWLGISLIVILFDQLT), 32 to 52 (IAVLKTFAYGAMHALTPFFNL), 71 to 91 (WQRWAFTALGIGATLVICYLL), and 100 to 120 (FSLSLALILGGALGNVIDRLI). Active-site residues include Asp126 and Asp144. Residues 135–155 (WHWPAFNLADSAITVGAVLLI) traverse the membrane as a helical segment.

This sequence belongs to the peptidase A8 family.

The protein localises to the cell inner membrane. The catalysed reaction is Release of signal peptides from bacterial membrane prolipoproteins. Hydrolyzes -Xaa-Yaa-Zaa-|-(S,diacylglyceryl)Cys-, in which Xaa is hydrophobic (preferably Leu), and Yaa (Ala or Ser) and Zaa (Gly or Ala) have small, neutral side chains.. It functions in the pathway protein modification; lipoprotein biosynthesis (signal peptide cleavage). This protein specifically catalyzes the removal of signal peptides from prolipoproteins. This is Lipoprotein signal peptidase from Burkholderia mallei (strain ATCC 23344).